The following is a 389-amino-acid chain: MALSRLSSRSNIITRPFSAAFSRLISTDTTPITIETSLPFTAHLCDPPSRSVESSSQELLDFFRTMALMRRMEIAADSLYKAKLIRGFCHLYDGQEAVAIGMEAAITKKDAIITAYRDHCIFLGRGGSLHEVFSELMGRQAGCSKGKGGSMHFYKKESSFYGGHGIVGAQVPLGCGIAFAQKYNKEEAVTFALYGDGAANQGQLFEALNISALWDLPAILVCENNHYGMGTAEWRAAKSPSYYKRGDYVPGLKVDGMDAFAVKQACKFAKQHALEKGPIILEMDTYRYHGHSMSDPGSTYRTRDEISGVRQERDPIERIKKLVLSHDLATEKELKDMEKEIRKEVDDAIAKAKDCPMPEPSELFTNVYVKGFGTESFGPDRKEVKASLP.

The N-terminal 32 residues, 1–32, are a transit peptide targeting the mitochondrion; sequence MALSRLSSRSNIITRPFSAAFSRLISTDTTPI. Residues His-90, Tyr-116, Arg-117, Gly-165, Val-167, Asp-196, Gly-197, Ala-198, Asn-225, and Tyr-227 each contribute to the pyruvate site. Residues Tyr-116, Arg-117, Gly-165, Val-167, Asp-196, Gly-197, Ala-198, and Asn-225 each contribute to the thiamine diphosphate site. Position 196 (Asp-196) interacts with Mg(2+). 2 residues coordinate Mg(2+): Asn-225 and Tyr-227. His-291 lines the thiamine diphosphate pocket.

In terms of assembly, tetramer of 2 alpha and 2 beta subunits. Thiamine diphosphate is required as a cofactor. Mg(2+) serves as cofactor. As to expression, expressed in roots, rosettes and flowers.

The protein resides in the mitochondrion matrix. The catalysed reaction is N(6)-[(R)-lipoyl]-L-lysyl-[protein] + pyruvate + H(+) = N(6)-[(R)-S(8)-acetyldihydrolipoyl]-L-lysyl-[protein] + CO2. Its activity is regulated as follows. E1 activity is regulated by phosphorylation (inactivation) and dephosphorylation (activation) of the alpha subunit. Its function is as follows. The pyruvate dehydrogenase complex catalyzes the overall conversion of pyruvate to acetyl-CoA and CO(2). It contains multiple copies of three enzymatic components: pyruvate dehydrogenase (E1), dihydrolipoamide acetyltransferase (E2) and lipoamide dehydrogenase (E3). The sequence is that of Pyruvate dehydrogenase E1 component subunit alpha-1, mitochondrial (E1 ALPHA) from Arabidopsis thaliana (Mouse-ear cress).